Consider the following 203-residue polypeptide: Small ribosomal subunit protein uS4 (203 aa).

Positions 93–153 constitute an S4 RNA-binding domain; it reads RRFDNVVFRA…QKSQNLDAVA (61 aa).

It belongs to the universal ribosomal protein uS4 family. Part of the 30S ribosomal subunit. Contacts protein S5. The interaction surface between S4 and S5 is involved in control of translational fidelity.

In terms of biological role, one of the primary rRNA binding proteins, it binds directly to 16S rRNA where it nucleates assembly of the body of the 30S subunit. With S5 and S12 plays an important role in translational accuracy. This Chlorobium phaeobacteroides (strain BS1) protein is Small ribosomal subunit protein uS4.